We begin with the raw amino-acid sequence, 200 residues long: Glutathione S-transferase domain-containing protein DDB_G0273153/DDB_G0273923 (200 aa).

The region spanning 1–71 (MISSIYIFKI…YISNNHNFSG (71 aa)) is the GST N-terminal domain. Residues 73-195 (SLQESARVDD…INSNNINSQS (123 aa)) enclose the GST C-terminal domain.

The protein belongs to the GST superfamily.

This chain is Glutathione S-transferase domain-containing protein DDB_G0273153/DDB_G0273923, found in Dictyostelium discoideum (Social amoeba).